Reading from the N-terminus, the 514-residue chain is ATP synthase subunit alpha (514 aa).

Residue 170–177 coordinates ATP; sequence GDRQIGKT.

This sequence belongs to the ATPase alpha/beta chains family. F-type ATPases have 2 components, CF(1) - the catalytic core - and CF(0) - the membrane proton channel. CF(1) has five subunits: alpha(3), beta(3), gamma(1), delta(1), epsilon(1). CF(0) has three main subunits: a(1), b(2) and c(9-12). The alpha and beta chains form an alternating ring which encloses part of the gamma chain. CF(1) is attached to CF(0) by a central stalk formed by the gamma and epsilon chains, while a peripheral stalk is formed by the delta and b chains.

Its subcellular location is the cell inner membrane. It catalyses the reaction ATP + H2O + 4 H(+)(in) = ADP + phosphate + 5 H(+)(out). Its function is as follows. Produces ATP from ADP in the presence of a proton gradient across the membrane. The alpha chain is a regulatory subunit. This Pseudomonas savastanoi pv. phaseolicola (strain 1448A / Race 6) (Pseudomonas syringae pv. phaseolicola (strain 1448A / Race 6)) protein is ATP synthase subunit alpha.